A 270-amino-acid polypeptide reads, in one-letter code: Checkpoint signal transducer rad24 (270 aa).

Ser-34 and Ser-66 each carry phosphoserine. Positions 242-270 (AAAGGNTEGAQENAPSNAPEGEAEPKADA) are disordered.

It belongs to the 14-3-3 family. In terms of assembly, homodimer. Binds preferentially to mei2 phosphorylated by ran1/pat1. Binds preferentially to cdc25 phosphorylated by srk1 during G2; the interaction is increased during osmotic stress. Interacts with byr2. Interacts with rad25.

Its subcellular location is the cytoplasm. Its function is as follows. Acts in cell cycle and stress checkpoint signaling by sequestering signal transducers regulated by the checkpoints. Required for the DNA damage checkpoint that ensures that DNA damage is repaired before mitosis is attempted. During environmental stress, sequesters srk1-phosphorylated cdc25 in the cytoplasm to delay the G2/M transition. Sequesters byr2 in the cytoplasm to prevent its translocation to the plasma membrane. Sequesters ran1/pat1-phosphorylated mei2 from its non-coding RNA activators (including meiRNA), to prevent meiotic induction in vegetative cells and to regulate meiosis I. This chain is Checkpoint signal transducer rad24, found in Schizosaccharomyces pombe (strain 972 / ATCC 24843) (Fission yeast).